We begin with the raw amino-acid sequence, 133 residues long: Small ribosomal subunit protein uS8 (133 aa).

The protein belongs to the universal ribosomal protein uS8 family. Part of the 30S ribosomal subunit. Contacts proteins S5 and S12.

In terms of biological role, one of the primary rRNA binding proteins, it binds directly to 16S rRNA central domain where it helps coordinate assembly of the platform of the 30S subunit. The polypeptide is Small ribosomal subunit protein uS8 (Chlamydia felis (strain Fe/C-56) (Chlamydophila felis)).